The sequence spans 132 residues: UPF0299 membrane protein YohJ (132 aa).

4 consecutive transmembrane segments (helical) span residues 5–25 (LNII…LYAG), 26–46 (IFIA…MLIL), 63–83 (GCYV…VGVM), and 93–113 (FGPV…VVSW).

This sequence belongs to the UPF0299 family.

Its subcellular location is the cell inner membrane. The sequence is that of UPF0299 membrane protein YohJ from Shigella flexneri serotype 5b (strain 8401).